Consider the following 163-residue polypeptide: MPSFRPKYLHSASLDFIGNRLRRRSLTETRSNGRRLELTSRIVSAYLSRNVIAPDELPYLIQQTYGSLNETSGPGETPPAVEEQRPAVPIKKSVTDDFIVCLEDGKKFKSLKRHLTTKYGMTPDQYREKWKLPSEYPMTARNYALQRSKLARAMGLGKSRALK.

This sequence belongs to the ros/MucR family.

The sequence is that of Putative MucR family transcriptional regulatory protein RA0938 from Rhizobium meliloti (strain 1021) (Ensifer meliloti).